Reading from the N-terminus, the 284-residue chain is Bifunctional protein FolD (284 aa).

Residues 165–167, S190, and V231 each bind NADP(+); that span reads GRS.

Belongs to the tetrahydrofolate dehydrogenase/cyclohydrolase family. As to quaternary structure, homodimer.

The catalysed reaction is (6R)-5,10-methylene-5,6,7,8-tetrahydrofolate + NADP(+) = (6R)-5,10-methenyltetrahydrofolate + NADPH. The enzyme catalyses (6R)-5,10-methenyltetrahydrofolate + H2O = (6R)-10-formyltetrahydrofolate + H(+). It functions in the pathway one-carbon metabolism; tetrahydrofolate interconversion. Its function is as follows. Catalyzes the oxidation of 5,10-methylenetetrahydrofolate to 5,10-methenyltetrahydrofolate and then the hydrolysis of 5,10-methenyltetrahydrofolate to 10-formyltetrahydrofolate. In Ruminiclostridium cellulolyticum (strain ATCC 35319 / DSM 5812 / JCM 6584 / H10) (Clostridium cellulolyticum), this protein is Bifunctional protein FolD.